We begin with the raw amino-acid sequence, 178 residues long: Transmembrane protein 196 (178 aa).

4 consecutive transmembrane segments (helical) span residues 11 to 31 (LLVL…VGAV), 47 to 67 (SSPV…ILCA), 73 to 93 (LVMI…ILNF), and 106 to 126 (LYPL…GCTL).

In terms of tissue distribution, expression is significantly decreased in lung cancer cells compared to normal lung tissue (at protein level).

It is found in the cytoplasm. It localises to the membrane. In terms of biological role, acts as a tumor suppressor in lung cancer. Inhibits tumor cell growth by inhibiting cell proliferation and migration and promoting cell apoptosis. Inhibits metastasis of lung cancer by suppressing beta-catenin expression in the Wnt/beta-catenin signaling pathway. The sequence is that of Transmembrane protein 196 (TMEM196) from Homo sapiens (Human).